Here is a 505-residue protein sequence, read N- to C-terminus: ATP synthase subunit alpha (505 aa).

Residue 172–179 (GDRQIGKT) coordinates ATP.

This sequence belongs to the ATPase alpha/beta chains family. In terms of assembly, F-type ATPases have 2 components, CF(1) - the catalytic core - and CF(0) - the membrane proton channel. CF(1) has five subunits: alpha(3), beta(3), gamma(1), delta(1), epsilon(1). CF(0) has three main subunits: a(1), b(2) and c(9-12). The alpha and beta chains form an alternating ring which encloses part of the gamma chain. CF(1) is attached to CF(0) by a central stalk formed by the gamma and epsilon chains, while a peripheral stalk is formed by the delta and b chains.

It is found in the cell inner membrane. It catalyses the reaction ATP + H2O + 4 H(+)(in) = ADP + phosphate + 5 H(+)(out). Its function is as follows. Produces ATP from ADP in the presence of a proton gradient across the membrane. The alpha chain is a regulatory subunit. This chain is ATP synthase subunit alpha, found in Syntrophobacter fumaroxidans (strain DSM 10017 / MPOB).